Reading from the N-terminus, the 332-residue chain is Fructose-1,6-bisphosphatase class 1 (332 aa).

Mg(2+) contacts are provided by glutamate 92, aspartate 113, leucine 115, and aspartate 116. Substrate-binding positions include 116–119, asparagine 209, tyrosine 242, and lysine 272; that span reads DGSS. Residue glutamate 278 coordinates Mg(2+).

The protein belongs to the FBPase class 1 family. Homotetramer. Requires Mg(2+) as cofactor.

Its subcellular location is the cytoplasm. The enzyme catalyses beta-D-fructose 1,6-bisphosphate + H2O = beta-D-fructose 6-phosphate + phosphate. Its pathway is carbohydrate biosynthesis; Calvin cycle. The sequence is that of Fructose-1,6-bisphosphatase class 1 from Prosthecochloris aestuarii (strain DSM 271 / SK 413).